The primary structure comprises 105 residues: Iron-sulfur cluster assembly protein CyaY (105 aa).

This sequence belongs to the frataxin family.

In terms of biological role, involved in iron-sulfur (Fe-S) cluster assembly. May act as a regulator of Fe-S biogenesis. The sequence is that of Iron-sulfur cluster assembly protein CyaY from Photobacterium profundum (strain SS9).